The following is a 1025-amino-acid chain: Serine/threonine-protein kinase TAO2 (1025 aa).

A Protein kinase domain is found at 28-281 (FADLREIGHG…SDMLLKHRFL (254 aa)). ATP is bound by residues 34 to 42 (IGHGSFGAV) and Lys57. The Proton acceptor role is filled by Asp151. Over residues 349 to 373 (ESSQSVPSMSISASSQSSSVNSLAD) the composition is skewed to low complexity. The interval 349 to 377 (ESSQSVPSMSISASSQSSSVNSLADASDD) is disordered. 2 coiled-coil regions span residues 457–650 (SALR…ECAM) and 755–876 (ILKR…EIEA). Disordered regions lie at residues 899–930 (FNQG…QNTG) and 945–1025 (SASW…LSYS). Pro residues predominate over residues 905 to 914 (APPPGWPSRP). Low complexity predominate over residues 947–986 (SWGLHPPGSSSSLSALPSSSSSSSSSPSSSSGGRPGLLLL). The segment covering 1007 to 1025 (SRSTSVTSQLSNGSHLSYS) has biased composition (polar residues).

It belongs to the protein kinase superfamily. STE Ser/Thr protein kinase family. STE20 subfamily. Mg(2+) serves as cofactor.

It catalyses the reaction L-seryl-[protein] + ATP = O-phospho-L-seryl-[protein] + ADP + H(+). The enzyme catalyses L-threonyl-[protein] + ATP = O-phospho-L-threonyl-[protein] + ADP + H(+). Its function is as follows. Serine/threonine-protein kinase involved in different processes such as apoptotic morphological changes, MAPK8/JNK and MAPK14/p38 MAPK signaling pathway. Activates the JNK MAP kinase pathway. The sequence is that of Serine/threonine-protein kinase TAO2 (taok2) from Xenopus laevis (African clawed frog).